A 232-amino-acid chain; its full sequence is Aquaporin Z (232 aa).

2 helical membrane-spanning segments follow: residues 8–28 (AFGTFWLVLGGCGSAVLAAGF) and 33–53 (IGLLGVALAFGLTVLTMAFAI). The short motif at 62–64 (NPA) is the NPA 1 element. The next 3 helical transmembrane spans lie at 84–104 (IIAQVIGGLIAGGILYVIATG), 130–150 (MLAALVSEIVMTMMFLIVIMG), and 159–179 (GFAPIAIGLCLTLIHLISIPV). An NPA 2 motif is present at residues 185-187 (NPA). Residues 201-221 (VSQLWLFWVAPIVGGVLGAVI) traverse the membrane as a helical segment.

Belongs to the MIP/aquaporin (TC 1.A.8) family. As to quaternary structure, homotetramer.

The protein resides in the cell inner membrane. The catalysed reaction is H2O(in) = H2O(out). Its function is as follows. Channel that permits osmotically driven movement of water in both directions. It is involved in the osmoregulation and in the maintenance of cell turgor during volume expansion in rapidly growing cells. It mediates rapid entry or exit of water in response to abrupt changes in osmolarity. The polypeptide is Aquaporin Z (Vibrio parahaemolyticus serotype O3:K6 (strain RIMD 2210633)).